A 103-amino-acid chain; its full sequence is Small ribosomal subunit protein eS24 (103 aa).

It belongs to the eukaryotic ribosomal protein eS24 family.

The sequence is that of Small ribosomal subunit protein eS24 from Methanococcus maripaludis (strain C6 / ATCC BAA-1332).